A 331-amino-acid chain; its full sequence is MRIDVLSIFPEYLEPLKLSLIGKAVTDGLLQLQVTDPREFATDRHRTVDDTPYGGGAGMVMKPEPWARALESVLRAGSDTTARSGSTAATSASAQQATRLGPDDDAAQPGDAGQGTAAPDYARTGGTPGAGRAASSRPVLVVPSPAGEVFTQEVAYELAEEEHLVFACGRYEGIDERFIEWARDEVRVRPLSLGDYVLNGGEVAVLAMVEAVTRLVPGVIGNPESLDEESHTGGLLEYPVYTKPAQWRERTVPDTLLSGHHGRIARWRRDQQLERTARRRPDMVLALDPATLDRADLAVLAAEGFTLRDGQWQRCSPAPSEQAPEGARDMA.

Composition is skewed to low complexity over residues 77–99 (GSDTTARSGSTAATSASAQQATR) and 107–134 (AQPGDAGQGTAAPDYARTGGTPGAGRAA). Residues 77-137 (GSDTTARSGS…PGAGRAASSR (61 aa)) are disordered. S-adenosyl-L-methionine contacts are provided by residues Gly169 and 193 to 198 (LGDYVL). The disordered stretch occupies residues 312–331 (WQRCSPAPSEQAPEGARDMA).

Belongs to the RNA methyltransferase TrmD family. Homodimer.

The protein localises to the cytoplasm. It carries out the reaction guanosine(37) in tRNA + S-adenosyl-L-methionine = N(1)-methylguanosine(37) in tRNA + S-adenosyl-L-homocysteine + H(+). In terms of biological role, specifically methylates guanosine-37 in various tRNAs. The chain is tRNA (guanine-N(1)-)-methyltransferase from Kocuria rhizophila (strain ATCC 9341 / DSM 348 / NBRC 103217 / DC2201).